The chain runs to 161 residues: Cytochrome c-type biogenesis protein CcmE (161 aa).

Residues 1 to 8 lie on the Cytoplasmic side of the membrane; it reads MNPRRKKR. The helical; Signal-anchor for type II membrane protein transmembrane segment at 9 to 29 threads the bilayer; that stretch reads LTLAVALVFGLGATIGLMLYA. Residues 30–161 are Periplasmic-facing; that stretch reads LSQNMDLFYT…SDEQKQGRVQ (132 aa). Heme is bound by residues His-129 and Tyr-133.

The protein belongs to the CcmE/CycJ family.

It localises to the cell inner membrane. Heme chaperone required for the biogenesis of c-type cytochromes. Transiently binds heme delivered by CcmC and transfers the heme to apo-cytochromes in a process facilitated by CcmF and CcmH. The sequence is that of Cytochrome c-type biogenesis protein CcmE from Photobacterium profundum (strain SS9).